The following is a 200-amino-acid chain: Glycerol-3-phosphate acyltransferase (200 aa).

The next 4 membrane-spanning stretches (helical) occupy residues 4 to 24 (ALLAVLGGYLLGSIPTGYWVG), 70 to 90 (ALGSALGSAWWVVLAALFAVI), 110 to 130 (LGILLAMAWPVALTTFGVWLL), and 158 to 178 (QPLPYLLFALAGGVYVIGAHR).

The protein belongs to the PlsY family. In terms of assembly, probably interacts with PlsX.

The protein localises to the cell inner membrane. It catalyses the reaction an acyl phosphate + sn-glycerol 3-phosphate = a 1-acyl-sn-glycero-3-phosphate + phosphate. It functions in the pathway lipid metabolism; phospholipid metabolism. Catalyzes the transfer of an acyl group from acyl-phosphate (acyl-PO(4)) to glycerol-3-phosphate (G3P) to form lysophosphatidic acid (LPA). This enzyme utilizes acyl-phosphate as fatty acyl donor, but not acyl-CoA or acyl-ACP. The sequence is that of Glycerol-3-phosphate acyltransferase from Synechococcus sp. (strain JA-2-3B'a(2-13)) (Cyanobacteria bacterium Yellowstone B-Prime).